The chain runs to 463 residues: Glutamate--tRNA ligase (463 aa).

The short motif at 10–20 (PSPTGHLHIGG) is the 'HIGH' region element. Positions 236–240 (KLSKR) match the 'KMSKS' region motif. K239 provides a ligand contact to ATP.

Belongs to the class-I aminoacyl-tRNA synthetase family. Glutamate--tRNA ligase type 1 subfamily. As to quaternary structure, monomer.

The protein localises to the cytoplasm. It carries out the reaction tRNA(Glu) + L-glutamate + ATP = L-glutamyl-tRNA(Glu) + AMP + diphosphate. In terms of biological role, catalyzes the attachment of glutamate to tRNA(Glu) in a two-step reaction: glutamate is first activated by ATP to form Glu-AMP and then transferred to the acceptor end of tRNA(Glu). This Nitratidesulfovibrio vulgaris (strain DP4) (Desulfovibrio vulgaris) protein is Glutamate--tRNA ligase.